A 976-amino-acid polypeptide reads, in one-letter code: Vacuolar membrane protease (976 aa).

At Met1–Lys15 the chain is on the cytoplasmic side. A helical transmembrane segment spans residues Thr16–Asp36. The Vacuolar segment spans residues His37–Leu359. N-linked (GlcNAc...) asparagine glycans are attached at residues Asn96 and Asn121. His156 and Asp168 together coordinate Zn(2+). Asn189 carries N-linked (GlcNAc...) asparagine glycosylation. Glu200 (proton acceptor) is an active-site residue. Glu201 provides a ligand contact to Zn(2+). N-linked (GlcNAc...) asparagine glycans are attached at residues Asn212 and Asn217. Residues Glu226 and His300 each contribute to the Zn(2+) site. The chain crosses the membrane as a helical span at residues Phe360–Ile380. Over Ser381–Trp392 the chain is Cytoplasmic. Residues Leu393–Phe412 form a helical membrane-spanning segment. Topologically, residues Ser413–Tyr428 are vacuolar. Residues Phe429 to Cys449 traverse the membrane as a helical segment. Over Ser450–Ser461 the chain is Cytoplasmic. Residues Leu462 to Leu482 form a helical membrane-spanning segment. Topologically, residues Tyr483–Ser496 are vacuolar. A helical membrane pass occupies residues Ile497 to Met517. At Arg518–Tyr627 the chain is on the cytoplasmic side. The disordered stretch occupies residues Arg528–Glu610. A compositionally biased stretch (polar residues) spans Asn549–Thr558. Residues Ser559–Asp570 are compositionally biased toward low complexity. Positions Asn582–Pro601 are enriched in basic and acidic residues. A helical membrane pass occupies residues Ala628–Val648. Over Asp649–Asp668 the chain is Vacuolar. Asn656 carries N-linked (GlcNAc...) asparagine glycosylation. A helical transmembrane segment spans residues Val669–Tyr689. The Cytoplasmic segment spans residues Lys690–Asn692. Residues Tyr693–Val713 traverse the membrane as a helical segment. Topologically, residues His714–Leu976 are vacuolar. Asn768, Asn796, Asn811, Asn866, and Asn937 each carry an N-linked (GlcNAc...) asparagine glycan.

This sequence belongs to the peptidase M28 family. It depends on Zn(2+) as a cofactor.

The protein resides in the vacuole membrane. In terms of biological role, may be involved in vacuolar sorting and osmoregulation. This is Vacuolar membrane protease from Saccharomyces cerevisiae (strain JAY291) (Baker's yeast).